The primary structure comprises 440 residues: Argininosuccinate lyase (440 aa).

The protein belongs to the lyase 1 family. Argininosuccinate lyase subfamily.

It is found in the cytoplasm. The catalysed reaction is 2-(N(omega)-L-arginino)succinate = fumarate + L-arginine. It participates in amino-acid biosynthesis; L-arginine biosynthesis; L-arginine from L-ornithine and carbamoyl phosphate: step 3/3. The polypeptide is Argininosuccinate lyase (Clostridium botulinum (strain Okra / Type B1)).